The following is a 215-amino-acid chain: Phosphoserine phosphatase (215 aa).

D11 serves as the catalytic Nucleophile. Residues D11 and D13 each coordinate Mg(2+). D13 (proton donor) is an active-site residue. Residues E20, R56, 99–100 (SG), and K144 contribute to the substrate site. Residue D167 participates in Mg(2+) binding. N170 contacts substrate.

Belongs to the HAD-like hydrolase superfamily. SerB family. Mg(2+) is required as a cofactor.

The catalysed reaction is O-phospho-L-serine + H2O = L-serine + phosphate. It carries out the reaction O-phospho-D-serine + H2O = D-serine + phosphate. It participates in amino-acid biosynthesis; L-serine biosynthesis; L-serine from 3-phospho-D-glycerate: step 3/3. This is Phosphoserine phosphatase from Streptococcus thermophilus (strain ATCC BAA-250 / LMG 18311).